Consider the following 577-residue polypeptide: Polyadenylate-binding protein, cytoplasmic and nuclear (577 aa).

Residues 1 to 10 (MADITDKTAE) are compositionally biased toward basic and acidic residues. Residues 1 to 36 (MADITDKTAEQLENLNIQDDQKQAATGSESQSVENS) are disordered. N-acetylalanine is present on Ala-2. Lys-7 is covalently cross-linked (Glycyl lysine isopeptide (Lys-Gly) (interchain with G-Cter in ubiquitin)). Positions 9 to 61 (AEQLENLNIQDDQKQAATGSESQSVENSSASLYVGDLEPSVSEAHLYDIFSPI) are required and sufficient for nuclear export. The segment covering 11–27 (QLENLNIQDDQKQAATG) has biased composition (polar residues). Residues 12–17 (LENLNI) carry the Nuclear export signal motif. RRM domains are found at residues 38-116 (ASLY…WSQR), 126-203 (GNIF…PHLS), 219-296 (TNLY…RAQK), and 322-399 (VNLF…IAQR). Arg-107 carries the omega-N-methylarginine modification. Ser-249 carries the post-translational modification Phosphoserine. Residues 281-317 (DSELNGEKLYVGRAQKKNERMHVLKKQYEAYRLEKMA) form a required and sufficient for nuclear import region. Position 332 is a phosphoserine (Ser-332). Lys-337 participates in a covalent cross-link: Glycyl lysine isopeptide (Lys-Gly) (interchain with G-Cter in ubiquitin). Ser-405 bears the Phosphoserine mark. The segment at 473-577 (PPQFRNGPVY…KEQEQQTEQA (105 aa)) is interaction with SUP35. Positions 489–568 (GFPRNANDNN…ASAAYESFKK (80 aa)) constitute a PABC domain.

This sequence belongs to the polyadenylate-binding protein type-1 family. Binds to poly(A) mRNA to form a periodic structure with a packing density of one molecule per 25 adenylate residues. Interacts with the nuclear export factor CRM1 and with the importin SXM1. Interacts with RNA15, a component of the cleavage factor IA (CFIA) complex. Interacts with translation initiation factor eIF4G (TIF4631 or TIF4632) and release factor eRF3 (SUP35). Interacts with the PAB-dependent poly(A)-nuclease (PAN) complex regulatory subunit PAN3. Interacts with ARF1, DCP1, PBP1, the Hsp70 chaperone SSA1, and TPA1. Interacts with PAT1 in an RNA-dependent manner.

It localises to the cytoplasm. The protein localises to the nucleus. Binds the poly(A) tail of mRNA. Appears to be an important mediator of the multiple roles of the poly(A) tail in mRNA biogenesis, stability and translation. In the nucleus, interacts with the nuclear cleavage factor IA (CFIA), which is required for both mRNA cleavage and polyadenylation. Is also required for efficient mRNA export to the cytoplasm. Acts in concert with a poly(A)-specific nuclease (PAN) to affect poly(A) tail shortening, which may occur concomitantly with either nucleocytoplasmic mRNA transport or translational initiation. Regulates PAN activity via interaction with the stimulator PAN3 or the inhibitor PBP1. In the cytoplasm, affects both translation and mRNA decay. Stimulates translation by interaction with translation initiation factor eIF4G, a subunit of the cap-binding complex eIF4F, bringing the 5'- and 3'-ends of the mRNA in proximity. The formation of this circular mRNP structure appears to be critical for the synergistic effects of the cap and the poly(A) tail in facilitating translation initiation, recycling of ribosomes, and mRNA stability. Also regulates translation termination by recruiting eukaryotic release factor 3 (eRF3). Interaction with eRF3 is also required for regulation of normal mRNA decay through translation termination-coupled poly(A) shortening, probably mediated by PAN. Loss of PAB1 from the mRNP after deadenylation triggers mRNA degradation. Inhibits the major cytoplasmic mRNA deadenylase CCR4-NOT complex. Is also associated peripherally with COPI vesicles through its interaction with ARF1, and this is required for correct localization of the asymmetrically distributed ASH1 mRNA. The polypeptide is Polyadenylate-binding protein, cytoplasmic and nuclear (PAB1) (Saccharomyces cerevisiae (strain ATCC 204508 / S288c) (Baker's yeast)).